The sequence spans 424 residues: MGCGTSKVLPEPPKDVQLDLVKKVEPFSGTKNDVYKHFITEVDSVGPLKAGFPATSQYAPPCPGVPNTGHTAPPSEPPRRARVAKYRAKFDPRVTAKYDIKALIGRGSFSRVVRVEHRATRQPYAIKMIETKYREGREVCESELRVLRRVRHANIIQLVEVFETQERVYMVMELATGGELFDRIIAKGSFTERDATRVLQMVLDGVRYLHALGITHRDLKPENLLYYHPGTDSKIIITDFGLASARKKGDDCLMKTTCGTPEYIAPEVLVRKPYTNSVDMWALGVIAYILLSGTMPFEDDNRTRLYRQILRGKYSYLGEPWPSVSNLAKDFIDRLLTVDPGARMTALQALRHPWVVSMAASSSMKNLHRSISQNLLKRASSRCQSTKSSQSTRSSRSTRSNKSRRVRERELRELNLRYQQQYNG.

Glycine 2 carries the N-myristoyl glycine lipid modification. A lipid anchor (S-palmitoyl cysteine) is attached at cysteine 3. The interval 59 to 79 is disordered; it reads APPCPGVPNTGHTAPPSEPPR. Residues 98 to 355 enclose the Protein kinase domain; the sequence is YDIKALIGRG…ALQALRHPWV (258 aa). Residues 104 to 112 and lysine 127 each bind ATP; that span reads IGRGSFSRV. The Proton acceptor role is filled by aspartate 218. The tract at residues 378 to 408 is disordered; it reads RASSRCQSTKSSQSTRSSRSTRSNKSRRVRE. Phosphoserine; by autocatalysis occurs at positions 380 and 381. Low complexity predominate over residues 381–398; that stretch reads SRCQSTKSSQSTRSSRST.

This sequence belongs to the protein kinase superfamily. CAMK Ser/Thr protein kinase family. Homodimer. Post-translationally, autophosphorylated on serine residues. In terms of processing, myristoylated. Required for membrane association. Prerequisite for palmitoylation to occur. Palmitoylated.

Its subcellular location is the golgi apparatus. The protein resides in the cytoplasm. It localises to the cytoskeleton. The protein localises to the microtubule organizing center. It is found in the centrosome. Its subcellular location is the nucleus speckle. The protein resides in the endoplasmic reticulum membrane. It localises to the cell membrane. It carries out the reaction L-seryl-[protein] + ATP = O-phospho-L-seryl-[protein] + ADP + H(+). The enzyme catalyses L-threonyl-[protein] + ATP = O-phospho-L-threonyl-[protein] + ADP + H(+). With respect to regulation, activity depends on Ca(2+) concentration. In terms of biological role, serine/threonine protein kinase that may be involved in the regulation of pre-mRNA processing. It may phosphorylate components of nuclear splice factor compartments (SFC), such as non-snRNP splicing factors containing a serine/arginine-rich domain (SR proteins). Reversible phosphorylation of SR proteins may cause their release into the nucleoplasm and change their local concentration, thereby influencing alternative splicing. This is Serine/threonine-protein kinase H1 (Pskh1) from Mus musculus (Mouse).